The primary structure comprises 352 residues: Inhibin beta C chain (352 aa).

The signal sequence occupies residues 1–18 (MASSLLLALLFLTPTTVV). A propeptide spanning residues 19–236 (NPKTEGPCPA…VEGKHRVRRR (218 aa)) is cleaved from the precursor. Asn111, Asn143, Asn161, and Asn173 each carry an N-linked (GlcNAc...) asparagine glycan. 4 disulfide bridges follow: Cys240-Cys248, Cys247-Cys317, Cys276-Cys349, and Cys280-Cys351.

Belongs to the TGF-beta family. In terms of assembly, homodimeric or heterodimeric through association with alpha and beta subunits, linked by one or more disulfide bonds. Inhibins are heterodimers of one alpha and one beta subunit. Activins are homo- or heterodimers of beta subunits only. Mainly expressed in the adult liver.

The protein localises to the secreted. Functionally, inhibins and activins inhibit and activate, respectively, the secretion of follitropin by the pituitary gland. Inhibins/activins are involved in regulating a number of diverse functions such as hypothalamic and pituitary hormone secretion, gonadal hormone secretion, germ cell development and maturation, erythroid differentiation, insulin secretion, nerve cell survival, embryonic axial development or bone growth, depending on their subunit composition. Inhibins appear to oppose the functions of activins. The sequence is that of Inhibin beta C chain (Inhbc) from Mus musculus (Mouse).